Consider the following 264-residue polypeptide: Intermembrane phospholipid transport system ATP-binding protein MlaF (264 aa).

The region spanning isoleucine 6–lysine 242 is the ABC transporter domain. An ATP-binding site is contributed by glycine 38–threonine 45.

It belongs to the ABC transporter superfamily. MlaF family. The complex is composed of two ATP-binding proteins (MlaF), two transmembrane proteins (MlaE), two cytoplasmic solute-binding proteins (MlaB) and six periplasmic solute-binding proteins (MlaD).

It is found in the cell inner membrane. In terms of biological role, part of the ABC transporter complex MlaFEDB, which is involved in a phospholipid transport pathway that maintains lipid asymmetry in the outer membrane by retrograde trafficking of phospholipids from the outer membrane to the inner membrane. Responsible for energy coupling to the transport system. This Haemophilus influenzae (strain ATCC 51907 / DSM 11121 / KW20 / Rd) protein is Intermembrane phospholipid transport system ATP-binding protein MlaF.